We begin with the raw amino-acid sequence, 51 residues long: Lantibiotic flavucin (51 aa).

The propeptide occupies 1–20 (MSDFTLDFAEGDAADTVSPQ). Positions 23 to 27 (SKSLC) form a cross-link, lanthionine (Ser-Cys). Cross-links (beta-methyllanthionine (Thr-Cys)) lie at residues 28–31 (TPGC), 33–38 (TGWMMC), and 42–45 (TKGC).

It belongs to the type A lantibiotic family. Post-translationally, maturation of lantibiotics involves the enzymatic conversion of Thr, and Ser into dehydrated AA and the formation of thioether bonds with cysteine. This is followed by membrane translocation and cleavage of the modified precursor.

With respect to regulation, antimicrobial activity depends on the dehydration degree and integrity of flavucin. Its function is as follows. Lanthionine-containing peptide antibiotic (lantibiotic) active on certain Gram-positive bacteria. The bactericidal activity of lantibiotics is based on depolarization of energized bacterial cytoplasmic membranes, initiated by the formation of aqueous transmembrane pores. Flavucin has high antimicrobial activity against several pathogenic bacteria such as S.aureus, E.faecalis, E.faecium and L.monocytogenes. Is also active against the Gram-negative P.aeruginosa. This chain is Lantibiotic flavucin, found in Corynebacterium lipophiloflavum (strain ATCC 700352 / DSM 44291 / CCUG 37336 / JCM 10383 / DMMZ 1944).